A 449-amino-acid chain; its full sequence is Bifunctional protein GlmU (449 aa).

The tract at residues 1 to 228 is pyrophosphorylase; sequence MSTALVILAA…EAETLGINSR (228 aa). Residues 8-11, Lys22, Gln75, 80-81, 103-105, Gly140, Glu154, Asn169, and Asn226 each bind UDP-N-acetyl-alpha-D-glucosamine; these read LAAG, GT, and YGD. Residue Asp105 participates in Mg(2+) binding. Asn226 lines the Mg(2+) pocket. The linker stretch occupies residues 229–249; sequence ADLAAAEAVFQAHARAELLDI. The N-acetyltransferase stretch occupies residues 250 to 449; that stretch reads GVTLTAPETV…RAKKAAKAKG (200 aa). Positions 315 and 333 each coordinate UDP-N-acetyl-alpha-D-glucosamine. His345 acts as the Proton acceptor in catalysis. Tyr348 and Asn359 together coordinate UDP-N-acetyl-alpha-D-glucosamine. Acetyl-CoA is bound by residues Ala362, 368–369, Ser387, Thr405, and Arg422; that span reads NY.

This sequence in the N-terminal section; belongs to the N-acetylglucosamine-1-phosphate uridyltransferase family. The protein in the C-terminal section; belongs to the transferase hexapeptide repeat family. Homotrimer. It depends on Mg(2+) as a cofactor.

It localises to the cytoplasm. It carries out the reaction alpha-D-glucosamine 1-phosphate + acetyl-CoA = N-acetyl-alpha-D-glucosamine 1-phosphate + CoA + H(+). The catalysed reaction is N-acetyl-alpha-D-glucosamine 1-phosphate + UTP + H(+) = UDP-N-acetyl-alpha-D-glucosamine + diphosphate. The protein operates within nucleotide-sugar biosynthesis; UDP-N-acetyl-alpha-D-glucosamine biosynthesis; N-acetyl-alpha-D-glucosamine 1-phosphate from alpha-D-glucosamine 6-phosphate (route II): step 2/2. Its pathway is nucleotide-sugar biosynthesis; UDP-N-acetyl-alpha-D-glucosamine biosynthesis; UDP-N-acetyl-alpha-D-glucosamine from N-acetyl-alpha-D-glucosamine 1-phosphate: step 1/1. It participates in bacterial outer membrane biogenesis; LPS lipid A biosynthesis. In terms of biological role, catalyzes the last two sequential reactions in the de novo biosynthetic pathway for UDP-N-acetylglucosamine (UDP-GlcNAc). The C-terminal domain catalyzes the transfer of acetyl group from acetyl coenzyme A to glucosamine-1-phosphate (GlcN-1-P) to produce N-acetylglucosamine-1-phosphate (GlcNAc-1-P), which is converted into UDP-GlcNAc by the transfer of uridine 5-monophosphate (from uridine 5-triphosphate), a reaction catalyzed by the N-terminal domain. This is Bifunctional protein GlmU from Ruegeria sp. (strain TM1040) (Silicibacter sp.).